The following is a 972-amino-acid chain: DNA cross-link repair 1A protein (972 aa).

Positions 14–80 (YKSIRKRKPQ…SEDLDPCKDD (67 aa)) are disordered. Over residues 23 to 37 (QSNPDSTSVSMQTVT) the composition is skewed to polar residues. A compositionally biased stretch (basic residues) spans 39–54 (GKCRPKRKGSGNRKKS). Positions 64–80 (SEQRLRPSEDLDPCKDD) are enriched in basic and acidic residues. The UBZ4-type zinc-finger motif lies at 105–135 (DGYCPSCQMPFSLLVVQTPRWHVAECLDTPG). Residues cysteine 108, cysteine 111, histidine 126, and cysteine 130 each coordinate Zn(2+). Disordered regions lie at residues 191 to 219 (KSSC…NNEC) and 552 to 623 (GEAC…TTDE). Over residues 210–219 (NLKNVPNNEC) the composition is skewed to polar residues.

It belongs to the DNA repair metallo-beta-lactamase (DRMBL) family. Binds PIAS1.

Its subcellular location is the nucleus. It catalyses the reaction a beta-lactam + H2O = a substituted beta-amino acid. Functionally, may be required for DNA interstrand cross-link repair. The sequence is that of DNA cross-link repair 1A protein (DCLRE1A) from Gallus gallus (Chicken).